A 1479-amino-acid chain; its full sequence is Type VII secretion system protein EssC (1479 aa).

A required for substrate secretion, protein missing this segment is unstable region spans residues methionine 1 to glutamate 189. The Cytoplasmic portion of the chain corresponds to methionine 1 to asparagine 229. Residues threonine 230–valine 252 form a helical membrane-spanning segment. Residues arginine 253–glycine 256 lie on the Extracellular side of the membrane. Residues isoleucine 257–serine 279 form a helical membrane-spanning segment. Topologically, residues glutamate 280–lysine 1479 are cytoplasmic. 2 consecutive FtsK domains span residues aspartate 652–asparagine 846 and glutamine 997–serine 1183. Residues glycine 672 to serine 679 and glycine 1014 to threonine 1021 each bind ATP. A required for substrate secretion, truncated protein is stable region spans residues methionine 1249–lysine 1479.

It belongs to the EssC family. As to quaternary structure, homooligomer. Interacts with EsaE.

It is found in the cell membrane. Component of the type VII secretion system (Ess). Required for the secretion of substrates including EsxA and EsxB. However, unable to support secretion of the substrate protein EsxC. The sequence is that of Type VII secretion system protein EssC from Staphylococcus aureus (strain NCTC 8325 / PS 47).